The primary structure comprises 156 residues: Endoribonuclease YbeY (156 aa).

The Zn(2+) site is built by H122, H126, and H132.

This sequence belongs to the endoribonuclease YbeY family. The cofactor is Zn(2+).

The protein localises to the cytoplasm. In terms of biological role, single strand-specific metallo-endoribonuclease involved in late-stage 70S ribosome quality control and in maturation of the 3' terminus of the 16S rRNA. This Bacillus cereus (strain ZK / E33L) protein is Endoribonuclease YbeY.